The sequence spans 539 residues: Lysosomal cobalamin transport escort protein LMBD1 (539 aa).

Residues 1 to 7 (MAAAASE) lie on the Extracellular side of the membrane. Residues 8-28 (LLTGWFLFGLALLAILIFSWV) traverse the membrane as a helical segment. Residues 29-47 (YVRKYQSRRESEVISTVTA) are Cytoplasmic-facing. A helical transmembrane segment spans residues 48-68 (IFALAVALISSALLPVDIFLV). Topologically, residues 69–97 (SYMKNQNGTFKDWADANVSRQIEDTVLYG) are extracellular. 2 N-linked (GlcNAc...) asparagine glycosylation sites follow: Asn75 and Asn85. A helical membrane pass occupies residues 98 to 118 (YYTLYSIILFCVFLWIPFVYF). The Cytoplasmic portion of the chain corresponds to 119 to 141 (YYEEKEEDDGNTCSQVKTALKYT). Residues 142–162 (LGFITVCAVLLLIGAFVPLDI) traverse the membrane as a helical segment. The Extracellular portion of the chain corresponds to 163 to 185 (PNKKNSTEWEKVKLLFEEFGSSH). The N-linked (GlcNAc...) asparagine glycan is linked to Asn167. Residues 186-206 (GLTALSFSISSLTVIGMLAAI) form a helical membrane-spanning segment. At 207 to 302 (TYTAYGMSAL…KFCEAIRPLK (96 aa)) the chain is on the cytoplasmic side. The chain crosses the membrane as a helical span at residues 303-323 (IVWGVFFIIVALLFTVSLFLS). Residues 324–361 (NLDKALHSAGFDSGFIILGTNLTNPLNMLLPVLQTVFP) lie on the Extracellular side of the membrane. The N-linked (GlcNAc...) asparagine glycan is linked to Asn344. The chain crosses the membrane as a helical span at residues 362–382 (LDYILITTIVMYFIFTSMAGI). The Cytoplasmic portion of the chain corresponds to 383 to 405 (RNMGIWFFWIRLYKIRRGKTRPQ). Residues 406–426 (ALLFLCMILLLIVLHTSYMIY) form a helical membrane-spanning segment. At 427 to 483 (SLAPQYVMYGSQKYLVQSNKTIDGQPKNVTTFVAKDCDADAPEDQCIVTRTYLFLHK) the chain is on the extracellular side. N-linked (GlcNAc...) asparagine glycans are attached at residues Asn445 and Asn454. A helical membrane pass occupies residues 484-504 (FWFFSAVYYFGNWAFIAVFLI). Over 505 to 539 (GLIVSCCKGKKSVIEGEVDEDDSDMSDDELSAYYC) the chain is Cytoplasmic.

Belongs to the LIMR family. LMBRD1 subfamily.

The protein localises to the endoplasmic reticulum membrane. The protein resides in the lysosome membrane. It localises to the cell membrane. In terms of biological role, lysosomal membrane chaperone required to export cobalamin (vitamin B12) from the lysosome to the cytosol, allowing its conversion to cofactors. Targets ABCD4 transporter from the endoplasmic reticulum to the lysosome. Then forms a complex with lysosomal ABCD4 and cytoplasmic MMACHC to transport cobalamin across the lysosomal membrane. May play a role in mediating and regulating the internalization of the insulin receptor. The protein is Lysosomal cobalamin transport escort protein LMBD1 (LMBRD1) of Gallus gallus (Chicken).